Consider the following 320-residue polypeptide: uncharacterized protein (320 aa).

At Arg61 the chain carries Omega-N-methylarginine. Positions 299-320 are disordered; the sequence is LHLQHQKQTSKDAGRQTPERKA. Positions 307–320 are enriched in basic and acidic residues; the sequence is TSKDAGRQTPERKA. Position 315 is a phosphothreonine (Thr315).

This is an uncharacterized protein from Mus musculus (Mouse).